We begin with the raw amino-acid sequence, 213 residues long: Heat shock protein 30C (213 aa).

Over residues 61–80 (SKDTEMRRITDQNRQSRESE) the composition is skewed to basic and acidic residues. 2 disordered regions span residues 61-93 (SKDT…GKDH) and 174-213 (ALPP…QKVD). Residues 76 to 188 (SRESEGTSPN…PETPIPISMD (113 aa)) enclose the sHSP domain.

It belongs to the small heat shock protein (HSP20) family.

This chain is Heat shock protein 30C (hsp30c), found in Xenopus laevis (African clawed frog).